We begin with the raw amino-acid sequence, 309 residues long: Ribosomal protein L11 methyltransferase (309 aa).

Thr144, Gly165, Asp187, and Asn235 together coordinate S-adenosyl-L-methionine.

The protein belongs to the methyltransferase superfamily. PrmA family.

It localises to the cytoplasm. The enzyme catalyses L-lysyl-[protein] + 3 S-adenosyl-L-methionine = N(6),N(6),N(6)-trimethyl-L-lysyl-[protein] + 3 S-adenosyl-L-homocysteine + 3 H(+). In terms of biological role, methylates ribosomal protein L11. The chain is Ribosomal protein L11 methyltransferase from Prochlorococcus marinus (strain MIT 9215).